Reading from the N-terminus, the 332-residue chain is MKVAVLGAGAWGTALAAHLAVRHDTLLWARDAALVAELAARRENARYLGGVALPPGLRYEADLATALSHAQADDALCVIAAPVAGLRALCRAMRDARRVPAHFVWVCKGFEADTRRLPHQMVAEELPDHASYGVLSGPSFAREVAQGLPVALTVASASAACRERTLAAFHHGAMRIYTGDDVVGVEVGGAVKNVLAIATGIADGLGLGLNARAALVTRGLAEMSRLGVALGGRAETFTGLTGLGDLILTATGDLSRNRSVGLQLAAGRSLDDILAALGHVAEGVRCARAVLSIARERGVDMPITEAVCAVLFDGVAPRDAVSGLLRRDAKAE.

3 residues coordinate NADPH: Trp-11, Arg-30, and Lys-108. Sn-glycerol 3-phosphate-binding residues include Lys-108, Gly-137, and Ser-139. Ala-141 lines the NADPH pocket. Sn-glycerol 3-phosphate-binding residues include Lys-192, Asp-245, Ser-255, Arg-256, and Asn-257. Lys-192 (proton acceptor) is an active-site residue. Arg-256 lines the NADPH pocket. NADPH is bound by residues Val-280 and Glu-282.

Belongs to the NAD-dependent glycerol-3-phosphate dehydrogenase family.

Its subcellular location is the cytoplasm. It catalyses the reaction sn-glycerol 3-phosphate + NAD(+) = dihydroxyacetone phosphate + NADH + H(+). The catalysed reaction is sn-glycerol 3-phosphate + NADP(+) = dihydroxyacetone phosphate + NADPH + H(+). Its pathway is membrane lipid metabolism; glycerophospholipid metabolism. Catalyzes the reduction of the glycolytic intermediate dihydroxyacetone phosphate (DHAP) to sn-glycerol 3-phosphate (G3P), the key precursor for phospholipid synthesis. The chain is Glycerol-3-phosphate dehydrogenase [NAD(P)+] from Burkholderia mallei (strain ATCC 23344).